The chain runs to 396 residues: Elongation factor Tu 2 (396 aa).

Residues 10–206 (KPHINVGTIG…VLDSYIPEPQ (197 aa)) enclose the tr-type G domain. A G1 region spans residues 19–26 (GHVDHGKT). 19–26 (GHVDHGKT) provides a ligand contact to GTP. T26 serves as a coordination point for Mg(2+). Residues 60–64 (GITIN) form a G2 region. Residues 81 to 84 (DCPG) form a G3 region. Residues 81-85 (DCPGH) and 136-139 (NKAD) each bind GTP. Positions 136 to 139 (NKAD) are G4. The segment at 174–176 (SAL) is G5.

The protein belongs to the TRAFAC class translation factor GTPase superfamily. Classic translation factor GTPase family. EF-Tu/EF-1A subfamily. In terms of assembly, monomer.

It localises to the cytoplasm. The enzyme catalyses GTP + H2O = GDP + phosphate + H(+). Functionally, GTP hydrolase that promotes the GTP-dependent binding of aminoacyl-tRNA to the A-site of ribosomes during protein biosynthesis. In Nitrosomonas eutropha (strain DSM 101675 / C91 / Nm57), this protein is Elongation factor Tu 2.